The sequence spans 406 residues: 2,3-diketo-5-methylthiopentyl-1-phosphate enolase (406 aa).

K94 (proton acceptor) is an active-site residue. Substrate contacts are provided by residues K143, 169 to 172 (KDDE), H260, G332, and 354 to 355 (GG). K169, D171, and E172 together coordinate Mg(2+). K169 is subject to N6-carboxylysine.

It belongs to the RuBisCO large chain family. Type IV subfamily. Homodimer. It depends on Mg(2+) as a cofactor.

The catalysed reaction is 5-methylsulfanyl-2,3-dioxopentyl phosphate = 2-hydroxy-5-methylsulfanyl-3-oxopent-1-enyl phosphate. It participates in amino-acid biosynthesis; L-methionine biosynthesis via salvage pathway; L-methionine from S-methyl-5-thio-alpha-D-ribose 1-phosphate: step 3/6. In terms of biological role, catalyzes the enolization of 2,3-diketo-5-methylthiopentyl-1-phosphate (DK-MTP-1-P) into 2-hydroxy-3-keto-5-methylthiopentenyl-1-phosphate (HK-MTPenyl-1-P). In Bacillus pumilus (strain SAFR-032), this protein is 2,3-diketo-5-methylthiopentyl-1-phosphate enolase.